The following is a 90-amino-acid chain: PqqA binding protein 2 (90 aa).

The protein belongs to the PqqD family. Monomer. Interacts with PqqE.

It functions in the pathway cofactor biosynthesis; pyrroloquinoline quinone biosynthesis. Its function is as follows. Functions as a PqqA binding protein and presents PqqA to PqqE, in the pyrroloquinoline quinone (PQQ) biosynthetic pathway. This chain is PqqA binding protein 2 (pqqD2), found in Pseudomonas putida (strain ATCC 47054 / DSM 6125 / CFBP 8728 / NCIMB 11950 / KT2440).